The primary structure comprises 241 residues: Sugar fermentation stimulation protein homolog (241 aa).

Belongs to the SfsA family.

The protein is Sugar fermentation stimulation protein homolog of Thermosynechococcus vestitus (strain NIES-2133 / IAM M-273 / BP-1).